The primary structure comprises 739 residues: NAD(P)H-quinone oxidoreductase subunit 5, chloroplastic (739 aa).

16 helical membrane-spanning segments follow: residues 9–29 (WIIP…LLLF), 40–60 (WSFQ…NLSI), 89–109 (IDPL…MVLI), 125–145 (FAYM…SNLI), 147–167 (IYIF…FWFT), 184–204 (IGDF…GSFE), 224–244 (LFVT…SAQF), 258–278 (TPIS…FLVA), 289–311 (YIMN…LALA), 318–338 (GLAF…GMGS), 354–374 (ALLF…VGYS), 396–416 (NTFL…CFWS), 427–447 (YSTI…FYIF), 546–566 (LFPL…GIPF), 605–625 (VSSV…YKPP), and 718–738 (ISSY…VFFI).

Belongs to the complex I subunit 5 family. NDH is composed of at least 16 different subunits, 5 of which are encoded in the nucleus.

Its subcellular location is the plastid. The protein resides in the chloroplast thylakoid membrane. It catalyses the reaction a plastoquinone + NADH + (n+1) H(+)(in) = a plastoquinol + NAD(+) + n H(+)(out). It carries out the reaction a plastoquinone + NADPH + (n+1) H(+)(in) = a plastoquinol + NADP(+) + n H(+)(out). NDH shuttles electrons from NAD(P)H:plastoquinone, via FMN and iron-sulfur (Fe-S) centers, to quinones in the photosynthetic chain and possibly in a chloroplast respiratory chain. The immediate electron acceptor for the enzyme in this species is believed to be plastoquinone. Couples the redox reaction to proton translocation, and thus conserves the redox energy in a proton gradient. The chain is NAD(P)H-quinone oxidoreductase subunit 5, chloroplastic (ndhF) from Coffea arabica (Arabian coffee).